Consider the following 309-residue polypeptide: D-allose kinase (309 aa).

Residues 10–17 (GVDMGATH) and 142–149 (GMGFAVWM) contribute to the ATP site.

It belongs to the ROK (NagC/XylR) family.

The catalysed reaction is D-allose + ATP = D-allose 6-phosphate + ADP + H(+). Its pathway is carbohydrate degradation; D-allose degradation. Its function is as follows. Catalyzes the phosphorylation of D-allose to D-allose 6-phosphate. Also has low level glucokinase activity in vitro. This is D-allose kinase from Escherichia coli (strain K12).